Reading from the N-terminus, the 226-residue chain is Lipoprotein signal peptidase (226 aa).

3 helical membrane-spanning segments follow: residues 12 to 32 (KVVA…KIWV), 69 to 89 (FLSL…AKLV), and 103 to 123 (SLII…GVIF). Catalysis depends on residues Asp150 and Asp184. Residues 173 to 193 (FVFFHPVFNFADSCISIGLIL) form a helical membrane-spanning segment.

Belongs to the peptidase A8 family.

Its subcellular location is the cell inner membrane. It carries out the reaction Release of signal peptides from bacterial membrane prolipoproteins. Hydrolyzes -Xaa-Yaa-Zaa-|-(S,diacylglyceryl)Cys-, in which Xaa is hydrophobic (preferably Leu), and Yaa (Ala or Ser) and Zaa (Gly or Ala) have small, neutral side chains.. The protein operates within protein modification; lipoprotein biosynthesis (signal peptide cleavage). In terms of biological role, this protein specifically catalyzes the removal of signal peptides from prolipoproteins. The protein is Lipoprotein signal peptidase of Porphyromonas gingivalis (strain ATCC 33277 / DSM 20709 / CIP 103683 / JCM 12257 / NCTC 11834 / 2561).